The chain runs to 744 residues: Receptor-like serine/threonine-protein kinase ALE2 (744 aa).

Positions 1–19 are cleaved as a signal peptide; the sequence is MRNFAMLLLLILLLHSLAS. Residues 20-260 are Extracellular-facing; it reads FPICFARLFP…SQGIGFRTIA (241 aa). A compositionally biased stretch (pro residues) spans 59-68; that stretch reads PAFSPNPSRI. The tract at residues 59–79 is disordered; that stretch reads PAFSPNPSRIPPLRHKGHHRH. Over residues 70 to 79 the composition is skewed to basic residues; sequence PLRHKGHHRH. N-linked (GlcNAc...) asparagine glycosylation is found at Asn-87, Asn-186, Asn-204, Asn-243, and Asn-249. The chain crosses the membrane as a helical span at residues 261 to 281; sequence IIALSGFVLILVLVGAISIIV. Residues 282 to 744 are Cytoplasmic-facing; it reads KWKKIGKSSN…HLWSGNGDWL (463 aa). A Protein kinase domain is found at 349–619; the sequence is FSAKRVLGEG…GEVVQALKLI (271 aa). ATP-binding positions include 355-363 and Lys-377; that span reads LGEGGFGRV. Catalysis depends on Asp-470, which acts as the Proton acceptor. 2 disordered regions span residues 681–705 and 722–744; these read EDMENRPHSASSIPRVGGLILPNRS and GSMSEHGGPSSSRHLWSGNGDWL.

This sequence belongs to the protein kinase superfamily. Ser/Thr protein kinase family. In terms of processing, autophosphorylated and phosphorylated by ACR4.

The protein localises to the cell membrane. It carries out the reaction L-seryl-[protein] + ATP = O-phospho-L-seryl-[protein] + ADP + H(+). It catalyses the reaction L-threonyl-[protein] + ATP = O-phospho-L-threonyl-[protein] + ADP + H(+). In terms of biological role, required during the differentiation of the protoderm into shoots epidermis and cuticle. This Arabidopsis thaliana (Mouse-ear cress) protein is Receptor-like serine/threonine-protein kinase ALE2 (ALE2).